The chain runs to 88 residues: Small ribosomal subunit protein bS18B (88 aa).

It belongs to the bacterial ribosomal protein bS18 family. Part of the 30S ribosomal subunit. Forms a tight heterodimer with protein bS6.

Functionally, binds as a heterodimer with protein bS6 to the central domain of the 16S rRNA, where it helps stabilize the platform of the 30S subunit. The sequence is that of Small ribosomal subunit protein bS18B (rpsR2) from Mycobacterium bovis (strain ATCC BAA-935 / AF2122/97).